An 85-amino-acid polypeptide reads, in one-letter code: Cloacin immunity protein (85 aa).

Lys-12 is modified (N6-methyllysine).

Belongs to the cloacin immunity protein family.

In terms of biological role, this protein complexes with cloacin protein in equimolar amounts and inhibits it by binding with high affinity to the C-terminal catalytic domain of cloacin. In Escherichia coli, this protein is Cloacin immunity protein (cim).